Reading from the N-terminus, the 206-residue chain is Holliday junction branch migration complex subunit RuvA (206 aa).

Residues 1-67 (MIASIFGKIT…QILEEGFAFN (67 aa)) form a domain I region. A domain II region spans residues 68–141 (TLEEKEWFSK…YDRDDGGKRI (74 aa)). Residues 141-145 (IKPNT) are flexible linker. Positions 146-206 (AMANDYDEMF…QNNEVTNKTA (61 aa)) are domain III.

This sequence belongs to the RuvA family. Homotetramer. Forms an RuvA(8)-RuvB(12)-Holliday junction (HJ) complex. HJ DNA is sandwiched between 2 RuvA tetramers; dsDNA enters through RuvA and exits via RuvB. An RuvB hexamer assembles on each DNA strand where it exits the tetramer. Each RuvB hexamer is contacted by two RuvA subunits (via domain III) on 2 adjacent RuvB subunits; this complex drives branch migration. In the full resolvosome a probable DNA-RuvA(4)-RuvB(12)-RuvC(2) complex forms which resolves the HJ.

It is found in the cytoplasm. The RuvA-RuvB-RuvC complex processes Holliday junction (HJ) DNA during genetic recombination and DNA repair, while the RuvA-RuvB complex plays an important role in the rescue of blocked DNA replication forks via replication fork reversal (RFR). RuvA specifically binds to HJ cruciform DNA, conferring on it an open structure. The RuvB hexamer acts as an ATP-dependent pump, pulling dsDNA into and through the RuvAB complex. HJ branch migration allows RuvC to scan DNA until it finds its consensus sequence, where it cleaves and resolves the cruciform DNA. The chain is Holliday junction branch migration complex subunit RuvA from Mycoplasma pneumoniae (strain ATCC 29342 / M129 / Subtype 1) (Mycoplasmoides pneumoniae).